Reading from the N-terminus, the 562-residue chain is Oxygen-dependent choline dehydrogenase (562 aa).

Residue 4–33 (DYIIIGAGSAGNVLATRLTEDPNTTVLLLE) coordinates FAD. Residue His-473 is the Proton acceptor of the active site.

This sequence belongs to the GMC oxidoreductase family. FAD is required as a cofactor.

The catalysed reaction is choline + A = betaine aldehyde + AH2. It catalyses the reaction betaine aldehyde + NAD(+) + H2O = glycine betaine + NADH + 2 H(+). It participates in amine and polyamine biosynthesis; betaine biosynthesis via choline pathway; betaine aldehyde from choline (cytochrome c reductase route): step 1/1. Functionally, involved in the biosynthesis of the osmoprotectant glycine betaine. Catalyzes the oxidation of choline to betaine aldehyde and betaine aldehyde to glycine betaine at the same rate. This chain is Oxygen-dependent choline dehydrogenase, found in Escherichia coli (strain SMS-3-5 / SECEC).